The chain runs to 645 residues: Zinc finger and SCAN domain-containing protein 2 (645 aa).

Disordered stretches follow at residues 1 to 25 (MMAAEIPRVTTPLSPLVQVPQEEDR), 37 to 75 (DDSWVQEAVLQEDGPESEPFPQSAGKGSPQEEVTRGPQG), and 193 to 230 (EMPEGESAQHSDGESDFERDAGIQRPQGHTPGKDHGEV). An SCAN box domain is found at 59-132 (SAGKGSPQEE…ALVEDLTQTL (74 aa)). The segment covering 199–214 (SAQHSDGESDFERDAG) has biased composition (basic and acidic residues). 14 consecutive C2H2-type zinc fingers follow at residues 253-275 (YECPQCGKTFSRKSHLITHERTH), 281-303 (YKCDECGKSFSDGSNFSRHQTTH), 309-331 (YKCRDCGKSFSRSANLITHQRIH), 337-359 (FQCAECGKSFSRSPNLIAHQRTH), 365-387 (YSCPECGKSFGNRSSLNTHQGIH), 393-415 (YECKECGESFSYNSNLIRHQRIH), 421-443 (YKCTDCGQRFSQSSALITHRRTH), 449-471 (YQCSECGKNFSRSSNLATHRRTH), 477-499 (YKCGVCGKSFSQSSSLIAHQGMH), 505-527 (YECLTCGESFSWSSNLLKHQRIH), 533-555 (YKCSECGKCFSQRSQLVVHQQTH), 561-583 (YKCLMCGKSFSRGSILVMHQRAH), 589-611 (YRCPECGKGFSWNSVLIIHQRIH), and 617-639 (YKCPECGKGFSNSSNFITHQRTH).

It belongs to the krueppel C2H2-type zinc-finger protein family.

The protein localises to the nucleus. Its function is as follows. May be involved in transcriptional regulation during the post-meiotic stages of spermatogenesis. This chain is Zinc finger and SCAN domain-containing protein 2 (ZSCAN2), found in Pongo abelii (Sumatran orangutan).